The sequence spans 295 residues: Glutamyl-Q tRNA(Asp) synthetase (295 aa).

Residues 5 to 9 (RFAPS) and E41 each bind L-glutamate. The 'HIGH' region signature appears at 8 to 18 (PSPTGLLHIGS). Zn(2+)-binding residues include C97, C99, Y117, and C121. L-glutamate-binding residues include Y178 and R196. The 'KMSKS' region signature appears at 234–238 (KWSKQ). ATP is bound at residue K237.

Belongs to the class-I aminoacyl-tRNA synthetase family. GluQ subfamily. Requires Zn(2+) as cofactor.

Its function is as follows. Catalyzes the tRNA-independent activation of glutamate in presence of ATP and the subsequent transfer of glutamate onto a tRNA(Asp). Glutamate is transferred on the 2-amino-5-(4,5-dihydroxy-2-cyclopenten-1-yl) moiety of the queuosine in the wobble position of the QUC anticodon. The protein is Glutamyl-Q tRNA(Asp) synthetase of Neisseria meningitidis serogroup B (strain ATCC BAA-335 / MC58).